The sequence spans 234 residues: Sugar fermentation stimulation protein homolog (234 aa).

It belongs to the SfsA family.

This Shewanella baltica (strain OS195) protein is Sugar fermentation stimulation protein homolog.